The following is a 235-amino-acid chain: Serine protease SplA (235 aa).

The N-terminal stretch at Met-1–Ala-35 is a signal peptide. Active-site charge relay system residues include His-74, Asp-113, and Ser-189.

It belongs to the peptidase S1B family.

Its subcellular location is the secreted. This chain is Serine protease SplA (splA), found in Staphylococcus aureus (strain MSSA476).